The sequence spans 101 residues: uncharacterized protein (101 aa).

The protein localises to the mitochondrion. This is an uncharacterized protein from Arabidopsis thaliana (Mouse-ear cress).